A 381-amino-acid polypeptide reads, in one-letter code: MAAAVVVAGEAAAAAGAGGKKRGASRSWILFDAAGEERVLDADKYAIMHRVDINARDLRILDPLLSYPSTILGRERAIVLNLEHIKAIITAEEVLLRDPLDDNVIPVVEELRRRLAPSSATQHDVEGAEEDESPFEFRALEVTLEAICSFLGARTTELESAAYPALDELTSKISSRNLDRVRKLKSGMTRLNARVQKVRDELEQLLDDDDDMADLYLSRKLAGAASPVSGSGGPNWFPASPTIGSKISRASRASAPTIHGNENDVEELEMLLEAYFMQIDGTLNKLTTLREYIDDTEDYINIQLDNHRNQLIQLELFLSSGTVCLSLYSLVAGIFGMNIPYTWNDNHGYVFKWVVLVSGLFCAFMFVSIVAYARHKGLVGS.

A run of 2 helical transmembrane segments spans residues 316-336 (LFLS…GIFG) and 353-373 (WVVL…VAYA). Positions 336-338 (GMN) match the Required for magnesium transport activity motif.

It belongs to the CorA metal ion transporter (MIT) (TC 1.A.35.5) family.

It is found in the membrane. Functionally, magnesium transporter that may mediate the influx of magnesium. The sequence is that of Magnesium transporter MRS2-I (MRS2-I) from Oryza sativa subsp. indica (Rice).